A 76-amino-acid polypeptide reads, in one-letter code: Alpha/kappa-conotoxin pl14a (76 aa).

An N-terminal signal peptide occupies residues Met1–Pro24. A propeptide spanning residues Gly25–Arg39 is cleaved from the precursor. 2 disulfides stabilise this stretch: Cys46–Cys61 and Cys50–Cys63. Arg64 bears the Arginine amide mark. Positions Gly65–Val76 are excised as a propeptide.

It belongs to the conotoxin J superfamily. Expressed by the venom duct.

The protein localises to the secreted. Functionally, highly inhibits both nicotinic acetylcholine receptors (neuronal (IC(50)=8.7 uM for alpha-3/beta-4) and muscular (IC(50)=0.54 uM for alpha-1-beta-1-epsilon-delta (CHRNA1-CHRNB1-CHRND-CHRNE)) subtypes) and the voltage-gated potassium channel Kv1.6/KCNA6 subtype (IC(50)=1.59 uM). This Conus planorbis (Planorbis cone) protein is Alpha/kappa-conotoxin pl14a.